Reading from the N-terminus, the 338-residue chain is tRNA-specific 2-thiouridylase MnmA (338 aa).

ATP-binding positions include 6-13 (AMSGGVDS) and Met-32. The active-site Nucleophile is the Cys-92. Cys-92 and Cys-186 are disulfide-bonded. Residue Gly-116 participates in ATP binding. The interval 134-136 (KDQ) is interaction with tRNA. Catalysis depends on Cys-186, which acts as the Cysteine persulfide intermediate. Residues 288-289 (RY) form an interaction with tRNA region.

The protein belongs to the MnmA/TRMU family.

The protein resides in the cytoplasm. It catalyses the reaction S-sulfanyl-L-cysteinyl-[protein] + uridine(34) in tRNA + AH2 + ATP = 2-thiouridine(34) in tRNA + L-cysteinyl-[protein] + A + AMP + diphosphate + H(+). Its function is as follows. Catalyzes the 2-thiolation of uridine at the wobble position (U34) of tRNA, leading to the formation of s(2)U34. The sequence is that of tRNA-specific 2-thiouridylase MnmA from Campylobacter jejuni subsp. jejuni serotype O:6 (strain 81116 / NCTC 11828).